Consider the following 102-residue polypeptide: Small ribosomal subunit protein uS10 (102 aa).

It belongs to the universal ribosomal protein uS10 family. In terms of assembly, part of the 30S ribosomal subunit.

Its function is as follows. Involved in the binding of tRNA to the ribosomes. In Thermosipho africanus (strain TCF52B), this protein is Small ribosomal subunit protein uS10.